Consider the following 256-residue polypeptide: Putative cysteine-rich repeat secretory protein 21 (256 aa).

An N-terminal signal peptide occupies residues 1 to 30 (MYSSVSKRLVSVHILVVVALQLLFIPNVLS). Gnk2-homologous domains are found at residues 37 to 139 (YLHH…SIDT) and 145 to 253 (YQNN…LYPF).

Belongs to the cysteine-rich repeat secretory protein family.

It is found in the secreted. The sequence is that of Putative cysteine-rich repeat secretory protein 21 (CRRSP21) from Arabidopsis thaliana (Mouse-ear cress).